A 212-amino-acid polypeptide reads, in one-letter code: Thymidylate kinase (212 aa).

Residue Gly-10 to Thr-17 participates in ATP binding.

This sequence belongs to the thymidylate kinase family.

The enzyme catalyses dTMP + ATP = dTDP + ADP. Functionally, phosphorylation of dTMP to form dTDP in both de novo and salvage pathways of dTTP synthesis. The polypeptide is Thymidylate kinase (Marinomonas sp. (strain MWYL1)).